The primary structure comprises 138 residues: Urease subunit beta (138 aa).

The interval 115 to 138 (RMRAAGFGDTGEAAPDDGDTESDQ) is disordered. The segment covering 128 to 138 (APDDGDTESDQ) has biased composition (acidic residues).

Belongs to the urease beta subunit family. As to quaternary structure, heterotrimer of UreA (gamma), UreB (beta) and UreC (alpha) subunits. Three heterotrimers associate to form the active enzyme.

Its subcellular location is the cytoplasm. The enzyme catalyses urea + 2 H2O + H(+) = hydrogencarbonate + 2 NH4(+). It functions in the pathway nitrogen metabolism; urea degradation; CO(2) and NH(3) from urea (urease route): step 1/1. The protein is Urease subunit beta of Haloarcula marismortui (strain ATCC 43049 / DSM 3752 / JCM 8966 / VKM B-1809) (Halobacterium marismortui).